Consider the following 260-residue polypeptide: Adenosylcobinamide-GDP ribazoletransferase (260 aa).

6 helical membrane passes run 40–60 (AFPF…LLLL), 64–84 (ADPL…TGAL), 117–137 (YGAI…AAIV), 142–162 (PLAA…AITW), 189–209 (FALV…FGLW), and 210–230 (PLVA…VFIR).

This sequence belongs to the CobS family. It depends on Mg(2+) as a cofactor.

The protein resides in the cell inner membrane. It catalyses the reaction alpha-ribazole + adenosylcob(III)inamide-GDP = adenosylcob(III)alamin + GMP + H(+). It carries out the reaction alpha-ribazole 5'-phosphate + adenosylcob(III)inamide-GDP = adenosylcob(III)alamin 5'-phosphate + GMP + H(+). The protein operates within cofactor biosynthesis; adenosylcobalamin biosynthesis; adenosylcobalamin from cob(II)yrinate a,c-diamide: step 7/7. Joins adenosylcobinamide-GDP and alpha-ribazole to generate adenosylcobalamin (Ado-cobalamin). Also synthesizes adenosylcobalamin 5'-phosphate from adenosylcobinamide-GDP and alpha-ribazole 5'-phosphate. This Rhizobium etli (strain CIAT 652) protein is Adenosylcobinamide-GDP ribazoletransferase.